The sequence spans 504 residues: Dimethylsulfoniopropionate lyase 5 (504 aa).

The protein belongs to the aspartate/glutamate racemases family. ALMA1 subfamily. In terms of assembly, homotetramer.

It catalyses the reaction S,S-dimethyl-beta-propiothetin = acrylate + dimethyl sulfide + H(+). Functionally, mediates cleavage of dimethylsulfoniopropionate (DMSP) into dimethyl sulfide (DMS) and acrylate. DMS is the principal form by which sulfur is transported from oceans to the atmosphere and is a key component of the ocean sulfur cycle. The chain is Dimethylsulfoniopropionate lyase 5 from Emiliania huxleyi (strain CCMP1516).